The chain runs to 474 residues: TOM1-like protein 1 (474 aa).

In terms of domain architecture, VHS spans 22–154; the sequence is ATFAGVLTED…DLLKKGVQFP (133 aa). The segment at 153-180 is disordered; sequence FPPSDGEPETRQEAGQISPNRPTSVPTA. Over residues 165–178 the composition is skewed to polar residues; sequence EAGQISPNRPTSVP. A Phosphoserine modification is found at Ser170. The 89-residue stretch at 199–287 folds into the GAT domain; it reads EQIGKLHSEL…AVLGYERFTR (89 aa). The tract at residues 291-317 is disordered; it reads RLLEQKRNRTEATRTSSEPSAPSCDLL. Residues 293-302 are compositionally biased toward basic and acidic residues; it reads LEQKRNRTEA. A phosphoserine mark is found at Ser313 and Ser320. An interaction with GRB2 region spans residues 392–395; the sequence is YDNF. The short motif at 420 to 424 is the SH3-binding element; it reads LPPLP. Residues 441–444 are interaction with PIK3R1; that stretch reads YEVM. Tyr457 is modified (phosphotyrosine). Positions 457–460 match the SH2-binding motif; sequence YEEI.

Belongs to the TOM1 family. As to quaternary structure, interacts with LYN. Interacts with the SH2 and SH3 domains of FYN when phosphorylated. Also interacts with GRB2 and PIK3R1 when phosphorylated. In terms of processing, phosphorylated on tyrosines by LYN. Phosphorylated on tyrosines by FYN. Strongly expressed in brain and kidney, expressed at intermediate levels skin and heart, and weakly expressed in thymus. Not expressed in liver and spleen.

Its subcellular location is the golgi apparatus. The protein resides in the golgi stack. The protein localises to the endosome membrane. It is found in the cytoplasm. It localises to the membrane. Its function is as follows. Probable adapter protein involved in signaling pathways. Interacts with the SH2 and SH3 domains of various signaling proteins when it is phosphorylated. May promote FYN activation, possibly by disrupting intramolecular SH3-dependent interactions. The polypeptide is TOM1-like protein 1 (Tom1l1) (Mus musculus (Mouse)).